We begin with the raw amino-acid sequence, 387 residues long: MRLSILLGLLPLAPRPPAVDAVEQRSEPAPLIEAQGEMIADKYIVKLKEGSALASLDAAMEKLSGKADHVYKNIFKGFAASLDEKMVEVLRAHPDVEYIEQDAIVNINAEQRNAPWGLARISSTSPGTSTYRYDDSAGQGTCVYVIDTGVEASHPEFEGRAQMVKTYYASSRDGNGHGTHCAGTIGSRTYGVAKKTQIFGVKVLNDQGSGQYSTIISGMDFVANDYRNRNCPNGVVASMSIGGGYSSSVNSAAANLQQSGVMVAVAAGNNNADARNYSPASESSICTVGATDRYDRRSSFSNYGSVLDIFAPGTDILSTWIGGSTRSISGTSMATPHVAGLAAYLMTLGRATASNACRYIAQTANQGDLSNISFGTVNLLAYNNYQG.

The N-terminal stretch at 1-21 (MRLSILLGLLPLAPRPPAVDA) is a signal peptide. A propeptide spanning residues 22–108 (VEQRSEPAPL…IEQDAIVNIN (87 aa)) is cleaved from the precursor. The Inhibitor I9 domain occupies 42 to 107 (KYIVKLKEGS…YIEQDAIVNI (66 aa)). The Peptidase S8 domain occupies 115-387 (PWGLARISST…NLLAYNNYQG (273 aa)). Thr124 contributes to the Ca(2+) binding site. Intrachain disulfides connect Cys142/Cys231 and Cys286/Cys357. Active-site charge relay system residues include Asp147 and His177. Asp308 serves as a coordination point for Ca(2+). Ser332 (charge relay system) is an active-site residue. A Ca(2+)-binding site is contributed by Asp368.

It belongs to the peptidase S8 family. Ca(2+) is required as a cofactor.

Its function is as follows. Serine proteinase. The protein is Proteinase R (PROR) of Parengyodontium album (Tritirachium album).